The following is a 333-amino-acid chain: Malate dehydrogenase (333 aa).

NAD(+) is bound by residues 10–15 and aspartate 34; that span reads GGGQIG. Residues arginine 83 and arginine 89 each contribute to the substrate site. NAD(+)-binding positions include asparagine 96 and 119-121; that span reads ITN. Residues asparagine 121 and arginine 152 each contribute to the substrate site. The active-site Proton acceptor is histidine 176.

This sequence belongs to the LDH/MDH superfamily. MDH type 3 family.

It catalyses the reaction (S)-malate + NAD(+) = oxaloacetate + NADH + H(+). Catalyzes the reversible oxidation of malate to oxaloacetate. The protein is Malate dehydrogenase of Parvibaculum lavamentivorans (strain DS-1 / DSM 13023 / NCIMB 13966).